Consider the following 432-residue polypeptide: Gamma-glutamyl phosphate reductase (432 aa).

The protein belongs to the gamma-glutamyl phosphate reductase family.

The protein resides in the cytoplasm. It catalyses the reaction L-glutamate 5-semialdehyde + phosphate + NADP(+) = L-glutamyl 5-phosphate + NADPH + H(+). It functions in the pathway amino-acid biosynthesis; L-proline biosynthesis; L-glutamate 5-semialdehyde from L-glutamate: step 2/2. Catalyzes the NADPH-dependent reduction of L-glutamate 5-phosphate into L-glutamate 5-semialdehyde and phosphate. The product spontaneously undergoes cyclization to form 1-pyrroline-5-carboxylate. This Ruminiclostridium cellulolyticum (strain ATCC 35319 / DSM 5812 / JCM 6584 / H10) (Clostridium cellulolyticum) protein is Gamma-glutamyl phosphate reductase.